Consider the following 661-residue polypeptide: MAAASTPPRAERKRXSWSRLPGAQRESAGLAKKCPFSLELAESGPPSSALYAPVSPPSAPEPAPPASPASPAPPAADQGPQPPVSLDPRVSIYSVRRPLLARTHIQGRVYNFLERPTGWKCFAYHFTVFLIVLVCLIFSVLSTIEQYATLATGTLFWMEIVLVVFFGTEYVVRLWSAGCRSKYVGLWGRLRFARKPISIIDLIVVVASMVVLCVGSKGQVFATSAIRGIRFLQILRMLHVDRQGGTWRLLGSVVFIHRQELITTLYIGFLGLIFSSYFVYLAEKDAVNESGRVEFGSYADALWWGVVTVTTIGYGDKVPQTWVGKTIASCFSVFAISFFALPAGILGSGFALKVQQKQRQKHFNRQIPAAASLIQTAWRCYAAENPDSATWKIYIRKPTRGHALLSPSPKPKKSAMVKKKKFKLDKDNGVSPGEKTLPVPQITCEPPEERRPDHFPVDSHDGSVRKSPALLEVSTPQFLRTNSFAEDLDLEGETLLAPITHVSQLREHHRATVKVIRRMQYFVAKKKFQQARKPYDVRDVIEQYSQGHLNLMVRIKELQRRLDQSIGKPSLFVPISEKSKDRGSNSIGARLNRVEDKVTQLDQRLVLIADMLQQLLALHQGRCHGGAHPAQARDGDPADPELFLPTYEQLTVPRRDPEEGS.

Disordered stretches follow at residues 1–29 (MAAASTPPRAERKRXSWSRLPGAQRESAG) and 42–88 (ESGP…SLDP). Residues 1-119 (MAAASTPPRA…YNFLERPTGW (119 aa)) lie on the Cytoplasmic side of the membrane. S27 is subject to Phosphoserine; by PKA. Residues 54 to 85 (VSPPSAPEPAPPASPASPAPPAADQGPQPPVS) are compositionally biased toward pro residues. A helical membrane pass occupies residues 120–141 (KCFAYHFTVFLIVLVCLIFSVL). The Extracellular portion of the chain corresponds to 142–152 (STIEQYATLAT). A helical membrane pass occupies residues 153-175 (GTLFWMEIVLVVFFGTEYVVRLW). Topologically, residues 176–191 (SAGCRSKYVGLWGRLR) are cytoplasmic. The chain crosses the membrane as a helical span at residues 192-217 (FARKPISIIDLIVVVASMVVLCVGSK). The Extracellular portion of the chain corresponds to 218-225 (GQVFATSA). A helical; Voltage-sensor membrane pass occupies residues 226–241 (IRGIRFLQILRMLHVD). The tract at residues 237 to 245 (MLHVDRQGG) is interaction with KCNE3. The Cytoplasmic segment spans residues 242 to 259 (RQGGTWRLLGSVVFIHRQ). Q243 contributes to the a 1,2-diacyl-sn-glycero-3-phospho-(1D-myo-inositol-4,5-bisphosphate) binding site. The helical transmembrane segment at 260 to 282 (ELITTLYIGFLGLIFSSYFVYLA) threads the bilayer. The Extracellular portion of the chain corresponds to 283–298 (EKDAVNESGRVEFGSY). An N-linked (GlcNAc...) asparagine glycan is attached at N288. The pore-forming intramembrane region spans 299-319 (ADALWWGVVTVTTIGYGDKVP). At 320-321 (QT) the chain is on the extracellular side. The helical transmembrane segment at 322-347 (WVGKTIASCFSVFAISFFALPAGILG) threads the bilayer. Topologically, residues 348–661 (SGFALKVQQK…VPRRDPEEGS (314 aa)) are cytoplasmic. Residues 369–381 (AAASLIQTAWRCY) are interaction with CALM. Phosphoserine occurs at positions 406 and 408. An interaction with CALM; calcium-dependent region spans residues 514–528 (KVIRRMQYFVAKKKF). The interaction with KCNE1 C-terminus stretch occupies residues 534–571 (PYDVRDVIEQYSQGHLNLMVRIKELQRRLDQSIGKPSL). Residues 584–620 (SNSIGARLNRVEDKVTQLDQRLVLIADMLQQLLALHQ) adopt a coiled-coil conformation. Positions 587–615 (IGARLNRVEDKVTQLDQRLVLIADMLQQL) are interaction with AKAP9. The segment at 588–619 (GARLNRVEDKVTQLDQRLVLIADMLQQLLALH) is C-terminal assembly domain (tetramerization). Positions 624-661 (HGGAHPAQARDGDPADPELFLPTYEQLTVPRRDPEEGS) are disordered.

Belongs to the potassium channel family. KQT (TC 1.A.1.15) subfamily. Kv7.1/KCNQ1 sub-subfamily. Tetramer. Heterotetramer with KCNE1; targets to the membrane raft. Interacts (via C-terminus) with CALM; forms a heterooctameric structure (with 4:4 KCNQ1:CALM stoichiometry) in a calcium-independent manner. Interacts with AKAP9; targets protein kinase A (PKA) catalytic and regulatory subunits and protein phosphatase 1 (PP1) to the KCNQ1-KCNE1 complex, allowing PKA-mediated phosphorylation and increase of delayed rectifier potassium channel activity. Interacts with KCNE2; form a heterooligomer complex that targets to the membrane raft and leading to currents with an apparently instantaneous activation, a rapid deactivation process and a linear current-voltage relationship and decreases the amplitude of the outward current. Interacts with AP2M1; mediates estrogen-induced internalization via clathrin-coated vesicles. Interacts with NEDD4L; promotes internalization and decreases I(Ks) currents. Interacts with USP2; counteracts the NEDD4L-specific down-regulation of I(Ks) and restore plasma membrane localization. Heterotetramer with KCNQ5; has a voltage-gated potassium channel activity. Interacts with KCNE3; four KCNE3 molecules are bound to one KCNQ1 tetramer (4:4 KCNQ1:KCNE3 stoichiometry); alters membrane raft localization; affects KCNQ1 structure and gating properties. Interacts with KCNE4; impairs KCNQ1 localization in lipid rafts and inhibits voltage-gated potassium channel activity. Interacts with KCNE5; impairs KCNQ1 localization in lipid rafts and only conducts current upon strong and continued depolarization. Interacts with SLC5A3; forms coregulatory channel-transporter complexes that modulate Na(+)-coupled myo-inositol influx through the transporter. In terms of processing, phosphorylation at Ser-27 by PKA; increases delayed rectifier potassium channel activity of the KCNQ1-KCNE1 complex through a macromolecular complex that includes PKA, PP1, and the targeting protein AKAP9. Post-translationally, ubiquitinated by NEDD4L; promotes internalization. The ubiquitinylated form is internalized through a clathrin-mediated endocytosis by interacting with AP2M1 and is recycled back to the cell membrane via RAB4A and RAB11A. Deubiquitinated by USP2; counteracts the NEDD4L-specific down-regulation of I(Ks) and restores the membrane localization.

The protein localises to the cell membrane. Its subcellular location is the cytoplasmic vesicle membrane. It is found in the early endosome. The protein resides in the membrane raft. It localises to the endoplasmic reticulum. The protein localises to the basolateral cell membrane. Its subcellular location is the apical cell membrane. It catalyses the reaction K(+)(in) = K(+)(out). PIP2 molecule is essential to activate KCNQ channels by inducing the coupling of the voltage-sensing domain (VSD) and the pore-forming domain (PD). Upon channel activation, PIP2 disrupts the VSD-calmodulin/CALM interactions, causing the release of CALM from the VSD which triggers the opening of the gate. Calcium potentiates KCNQ1 channel current through calcium-bound CALM. Calcium-bound CALM competes with PIP2 to stabilize the channel open state. Functionally, pore-forming subunit of the voltage-gated potassium (Kv) channel involved in the regulation of cardiomyocyte excitability and important in normal development and functions of myocardium, inner ear, stomach and colon. Associates with KCNE beta subunits that modulates current kinetics. Induces a voltage-dependent by rapidly activating and slowly deactivating potassium-selective outward current. Also promotes a delayed voltage activated potassium current showing outward rectification characteristic. During beta-adrenergic receptor stimulation participates in cardiac repolarization by associating with KCNE1 to form the I(Ks) cardiac potassium current that increases the amplitude and slows down the activation kinetics of outward potassium current I(Ks). Muscarinic agonist oxotremorine-M strongly suppresses KCNQ1/KCNE1 current. When associated with KCNE3, forms the potassium channel that is important for cyclic AMP-stimulated intestinal secretion of chloride ions. This interaction with KCNE3 is reduced by 17beta-estradiol, resulting in the reduction of currents. During conditions of increased substrate load, maintains the driving force for proximal tubular and intestinal sodium ions absorption, gastric acid secretion, and cAMP-induced jejunal chloride ions secretion. Allows the provision of potassium ions to the luminal membrane of the secretory canaliculus in the resting state as well as during stimulated acid secretion. When associated with KCNE2, forms a heterooligomer complex leading to currents with an apparently instantaneous activation, a rapid deactivation process and a linear current-voltage relationship and decreases the amplitude of the outward current. When associated with KCNE4, inhibits voltage-gated potassium channel activity. When associated with KCNE5, this complex only conducts current upon strong and continued depolarization. Also forms a heterotetramer with KCNQ5 that has a voltage-gated potassium channel activity. Binds with phosphatidylinositol 4,5-bisphosphate. KCNQ1-KCNE2 channel associates with Na(+)-coupled myo-inositol symporter in the apical membrane of choroid plexus epithelium and regulates the myo-inositol gradient between blood and cerebrospinal fluid with an impact on neuron excitability. In Oryctolagus cuniculus (Rabbit), this protein is Potassium voltage-gated channel subfamily KQT member 1.